Reading from the N-terminus, the 253-residue chain is Putative B3 domain-containing protein Os03g0619850 (253 aa).

Residues 26–119 (MSCFLIRMTT…CFEVMILDSD (94 aa)) constitute a DNA-binding region (TF-B3). Disordered stretches follow at residues 126–150 (LKSN…AGPP) and 230–253 (HRDA…EQDS). The span at 230-239 (HRDADQERQM) shows a compositional bias: basic and acidic residues.

It localises to the nucleus. The polypeptide is Putative B3 domain-containing protein Os03g0619850 (Oryza sativa subsp. japonica (Rice)).